The primary structure comprises 183 residues: UPF0200 protein MMP1282 (183 aa).

An ATP-binding site is contributed by 8–15 (GMPGSGKS).

Belongs to the UPF0200 family.

This Methanococcus maripaludis (strain DSM 14266 / JCM 13030 / NBRC 101832 / S2 / LL) protein is UPF0200 protein MMP1282.